Reading from the N-terminus, the 316-residue chain is GTP cyclohydrolase FolE2 1 (316 aa).

This sequence belongs to the GTP cyclohydrolase IV family.

The catalysed reaction is GTP + H2O = 7,8-dihydroneopterin 3'-triphosphate + formate + H(+). Its pathway is cofactor biosynthesis; 7,8-dihydroneopterin triphosphate biosynthesis; 7,8-dihydroneopterin triphosphate from GTP: step 1/1. Functionally, converts GTP to 7,8-dihydroneopterin triphosphate. This chain is GTP cyclohydrolase FolE2 1, found in Burkholderia lata (strain ATCC 17760 / DSM 23089 / LMG 22485 / NCIMB 9086 / R18194 / 383).